The primary structure comprises 1596 residues: SET-binding protein (1596 aa).

Residues 1-12 (MESRETLSSSRQ) are compositionally biased toward polar residues. 3 disordered regions span residues 1-83 (MESR…WVAG), 134-426 (KQSG…SIKA), and 475-518 (SPSV…SRKL). The segment covering 64 to 81 (GSGRDVDSNSNADSEKWV) has biased composition (basic and acidic residues). Positions 164-175 (LTASDLAASDLK) are enriched in low complexity. Polar residues-rich tracts occupy residues 213–236 (KSSS…QNCF) and 270–282 (AGNT…NNNK). Residues 290–306 (APSPSSHSSPAPPSSSA) show a composition bias toward low complexity. A compositionally biased stretch (basic and acidic residues) spans 363-372 (DNTEGKREGY). Positions 375–395 (DSAQEASPARQNVSSASNPEN) are enriched in polar residues. The a.T hook 1 DNA-binding region spans 584–596 (KKKRGRPKKQPLL). Disordered regions lie at residues 604-624 (GTST…KKRK), 722-763 (YIGK…AVPS), and 777-796 (HPLS…ASTE). The segment covering 779 to 796 (LSTQLGGSNGNLSPASTE) has biased composition (polar residues). Lysine 817 carries the post-translational modification N6-acetyllysine. A compositionally biased stretch (polar residues) spans 854–880 (SPVSESHSEETIPSDSGIGTDNNSTSD). Residues 854-889 (SPVSESHSEETIPSDSGIGTDNNSTSDQAEKSSESR) are disordered. A DNA-binding region (a.T hook 2) is located at residues 1016-1028 (KKKRGRPAKTNDT). Disordered regions lie at residues 1134–1164 (PPKV…DRIL), 1202–1225 (EKNK…SKNN), 1245–1300 (AKEK…GSKR), 1325–1344 (SSYD…KVDQ), 1440–1473 (QRQS…DQMP), and 1518–1596 (EAPP…EVLP). Over residues 1146–1159 (RLHKRKHKHKHKHK) the composition is skewed to basic residues. The span at 1450-1459 (VKKRRGRPRK) shows a compositional bias: basic residues. Positions 1451–1463 (KKRRGRPRKQPTQ) form a DNA-binding region, a.T hook 3. 3 tandem repeats follow at residues 1520–1527 (PPLPPPPP), 1528–1535 (PPLPPPPP), and 1536–1543 (PPLPPPPP). Positions 1520–1543 (PPLPPPPPPPLPPPPPPPLPPPPP) are 3 X 8 AA tandem repeats of P-P-L-P-P-P-P-P. Composition is skewed to pro residues over residues 1520–1546 (PPLP…PLPK) and 1560–1572 (PAQP…PQQP).

As to quaternary structure, interacts with SET. Expressed in numerous tissues. Expressed at low levels in myeloid and monocytic cells as well as in CD34+ cells; expression levels are higher in myeloid malignancies.

The protein resides in the nucleus. The sequence is that of SET-binding protein (SETBP1) from Homo sapiens (Human).